A 337-amino-acid chain; its full sequence is Anaerobic sulfite reductase subunit C (337 aa).

[4Fe-4S] cluster is bound by residues C115, C121, C153, C157, C180, C183, C186, C190, C212, C215, C218, and C222. C157 lines the siroheme pocket. 2 consecutive 4Fe-4S ferredoxin-type domains span residues 171-200 (AKMR…CLAL) and 203-232 (GKAV…RKPD).

Belongs to the nitrite and sulfite reductase 4Fe-4S domain family. As to quaternary structure, the anaerobic sulfite reductase seems to consist of three subunits. Requires [4Fe-4S] cluster as cofactor. The cofactor is siroheme.

It is found in the cytoplasm. It catalyses the reaction hydrogen sulfide + 3 NAD(+) + 3 H2O = sulfite + 3 NADH + 4 H(+). The protein operates within sulfur metabolism; sulfite reduction. Its function is as follows. This enzyme catalyzes the hydrogen sulfide production from sulfite. It is strictly anaerobic. It is regulated by electron acceptors rather than by cysteine. The chain is Anaerobic sulfite reductase subunit C (asrC) from Salmonella typhi.